We begin with the raw amino-acid sequence, 190 residues long: Threonylcarbamoyl-AMP synthase (190 aa).

The YrdC-like domain maps to 7-190; that stretch reads GDAIAAAIDV…ALTGELFRQG (184 aa).

This sequence belongs to the SUA5 family. TsaC subfamily.

The protein localises to the cytoplasm. The catalysed reaction is L-threonine + hydrogencarbonate + ATP = L-threonylcarbamoyladenylate + diphosphate + H2O. Required for the formation of a threonylcarbamoyl group on adenosine at position 37 (t(6)A37) in tRNAs that read codons beginning with adenine. Catalyzes the conversion of L-threonine, HCO(3)(-)/CO(2) and ATP to give threonylcarbamoyl-AMP (TC-AMP) as the acyladenylate intermediate, with the release of diphosphate. This is Threonylcarbamoyl-AMP synthase from Shigella boydii serotype 4 (strain Sb227).